A 339-amino-acid chain; its full sequence is GTPase Obg (339 aa).

Residues 1–159 (MKFVDEAFVR…RELKLELKLL (159 aa)) enclose the Obg domain. Residues 160 to 333 (ADVGLLGLPN…LCYDLMSFLE (174 aa)) form the OBG-type G domain. GTP contacts are provided by residues 166–173 (GLPNAGKS), 191–195 (FTTLY), 213–216 (DIPG), 283–286 (NKID), and 314–316 (SAI). Mg(2+) contacts are provided by Ser-173 and Thr-193.

It belongs to the TRAFAC class OBG-HflX-like GTPase superfamily. OBG GTPase family. As to quaternary structure, monomer. The cofactor is Mg(2+).

The protein localises to the cytoplasm. An essential GTPase which binds GTP, GDP and possibly (p)ppGpp with moderate affinity, with high nucleotide exchange rates and a fairly low GTP hydrolysis rate. Plays a role in control of the cell cycle, stress response, ribosome biogenesis and in those bacteria that undergo differentiation, in morphogenesis control. This Coxiella burnetii (strain RSA 331 / Henzerling II) protein is GTPase Obg.